Consider the following 180-residue polypeptide: Trafficking protein particle complex subunit 3 (180 aa).

A lipid anchor (S-palmitoyl cysteine) is attached at C68.

Belongs to the TRAPP small subunits family. BET3 subfamily. Homodimer. Component of the multisubunit transport protein particle (TRAPP) complex, which includes at least TRAPPC2, TRAPPC2L, TRAPPC3, TRAPPC3L, TRAPPC4, TRAPPC5, TRAPPC8, TRAPPC9, TRAPPC10, TRAPPC11 and TRAPPC12. Heterodimer with TRAPPC6A. The heterodimer TRAPPC3-TRAPPC6A interacts with TRAPPC2L. Heterodimer with TRAPPC6b. The heterodimer TRAPPC6B-TRAPPC3 interacts with TRAPPC1 likely providing a core for TRAPP complex formation.

The protein resides in the golgi apparatus. It localises to the cis-Golgi network. It is found in the endoplasmic reticulum. May play a role in vesicular transport from endoplasmic reticulum to Golgi. The polypeptide is Trafficking protein particle complex subunit 3 (Homo sapiens (Human)).